Reading from the N-terminus, the 105-residue chain is Endogenous retrovirus group K member 8 Rec protein (105 aa).

The disordered stretch occupies residues 1-48 (MNPSEMQRKAPPRRRRHRNRAPLTHKMNKMVTSEEQMKLPSTKKAEPP). Basic residues predominate over residues 10 to 20 (APPRRRRHRNR). Residues 13–20 (RRRRHRNR) carry the Nuclear localization signal motif. The Nuclear export signal motif lies at 50 to 59 (WAQLKKLTQL).

As to quaternary structure, forms homodimers, homotrimers, and homotetramers via a C-terminal domain. Associates with XPO1 and with ZNF145.

The protein localises to the cytoplasm. It is found in the nucleus. The protein resides in the nucleolus. Its function is as follows. Retroviral replication requires the nuclear export and translation of unspliced, singly-spliced and multiply-spliced derivatives of the initial genomic transcript. Rec interacts with a highly structured RNA element (RcRE) present in the viral 3'LTR and recruits the cellular nuclear export machinery. This permits export to the cytoplasm of unspliced genomic or incompletely spliced subgenomic viral transcripts. The chain is Endogenous retrovirus group K member 8 Rec protein (ERVK-8) from Homo sapiens (Human).